The chain runs to 191 residues: Cathelicidin-related peptide Oh-Cath (191 aa).

An N-terminal signal peptide occupies residues 1–22; it reads MEGFFWKTLLVVGALAIGGTSS. Residues 23–161 constitute a propeptide that is removed on maturation; the sequence is LPHKPLTYEE…DQPRRVKRFK (139 aa). Cystine bridges form between Cys81–Cys92 and Cys103–Cys120. Positions 125–151 are enriched in acidic residues; the sequence is EEEEQKQEEGNEEEKEVEKEEKEEDEK. Residues 125-154 form a disordered region; the sequence is EEEEQKQEEGNEEEKEVEKEEKEEDEKDQP.

It belongs to the cathelicidin family. As to expression, expressed by the venom gland.

The protein localises to the secreted. It localises to the target cell membrane. Functionally, potent antimicrobial peptide against Gram-negative (MIC=0.25 ug/ml against E.coli ATCC 25922, MIC=0.5 ug/ml against P.aeruginosa) and Gram-positive bacteria (MIC=64 ug/ml against E.faecalis, MIC=64 ug/ml against S.aureus). Adopts an amphipathic alpha helical conformation, that may allow to partition into the target membrane. Low hemolytic activities have been observed on mammalian cells. The protein is Cathelicidin-related peptide Oh-Cath of Ophiophagus hannah (King cobra).